We begin with the raw amino-acid sequence, 326 residues long: GTP cyclohydrolase MptA (326 aa).

The protein belongs to the GTP cyclohydrolase IV family. As to quaternary structure, homodimer. It depends on Fe(2+) as a cofactor.

The catalysed reaction is GTP + H2O = 7,8-dihydroneopterin 2',3'-cyclic phosphate + formate + diphosphate + H(+). Its pathway is cofactor biosynthesis; 5,6,7,8-tetrahydromethanopterin biosynthesis. Its function is as follows. Converts GTP to 7,8-dihydro-D-neopterin 2',3'-cyclic phosphate, the first intermediate in the biosynthesis of coenzyme methanopterin. This chain is GTP cyclohydrolase MptA, found in Methanoregula boonei (strain DSM 21154 / JCM 14090 / 6A8).